A 780-amino-acid polypeptide reads, in one-letter code: MAAPPDLQDEPLSLGSPGSQWFGGRGDGEDEATAVMGARPAQQDGEPAWGSGAGAGVTSSRELCSGPARSPPVAMETASTGMAAVPDALDHSPSSTLKDGEGACYTSLISDVCYPPREDSAYFTGILQKENGHITTSESPEEPETPGPSLPEVPGMEPQGLLSSDSGIEMTPAESTEVNKILADPLDQMKAEAYKYIDITRPQEAKGQEEQHPGLEDKDLDFKDKDTEVSTKAEGVRAPNQPAPVEGKLIKDHLFEESTFAPYIDELSDEQHRVSLVTAPVKITLTEIEPPLMTATQETIPEKQDLCLKPSPDTVPTVTVSEPEDDSPGSVTPPSSGTEPSAAESQGKGSVSEDELIAAIKEAKGLSYETTESPRPVGQVADKPKTKTRSGLPTIPSPLDQEASSAESGDSEIELVSEDPMASEDALPSGYVSFGHVSGPPPSPASPSIQYSILREEREAELDSELIIESCDASSASEESPKREQDSPPMKPGALDAIREETGSRATEERAPSHQGPVEPDPMLSFAPAAALQSRPEPSSGDGASVPEPPRSQQQKPEEEAVSSSQSPTATEIPGPLGSGLMPPLPFFNKQKAIDLLYWRDIKQTGIVFGSFLLLLFSLTQFSVVSVVAYLALAALSATISFRIYKSVLQAVQKTDEGHPFKAYLELEITLSQEQIQKYTDCLQLYVNSTLKELRRLFLVQDLVDSLKFAVLMWLLTYVGALFNGLTLLLMAVVSMFTLPVVYVKHQAQVDQYLGLVRTHINTVVAKIQAKIPGAKRHAE.

Disordered regions lie at residues 1–76, 128–176, 201–223, and 293–576; these read MAAP…VAME, QKEN…AEST, RPQE…LDFK, and MTAT…IPGP. Phosphoserine occurs at positions 13 and 70. S327 carries the post-translational modification Phosphoserine. The span at 328–341 shows a compositional bias: low complexity; sequence PGSVTPPSSGTEPS. A phosphoserine mark is found at S350, S352, and S487. Residues 497–512 show a composition bias toward basic and acidic residues; sequence AIREETGSRATEERAP. The Reticulon domain maps to 593–780; sequence AIDLLYWRDI…KIPGAKRHAE (188 aa). 2 helical membrane passes run 607–627 and 709–729; these read IVFG…VVSV and FAVL…LTLL.

As to quaternary structure, interacts with NDRG1. Interacts with BACE1. Interacts with TMEM33.

It localises to the endoplasmic reticulum membrane. Its subcellular location is the golgi apparatus membrane. Functionally, inhibits amyloid precursor protein processing, probably by blocking BACE1 activity. The chain is Reticulon-1 (Rtn1) from Mus musculus (Mouse).